A 441-amino-acid polypeptide reads, in one-letter code: Protein eva-1 homolog C (441 aa).

The disordered stretch occupies residues 1–23; the sequence is MLLPGRARQPPTPQPVQHPGLRR. The signal sequence occupies residues 1–48; that stretch reads MLLPGRARQPPTPQPVQHPGLRRQVEPPGQLLRLFYCTVLVCSKEISA. The Extracellular segment spans residues 49-322; the sequence is LTDFSGYLTK…AYIRAHPERA (274 aa). N-linked (GlcNAc...) asparagine glycosylation is present at Asn-62. An SUEL-type lectin 1 domain is found at 67 to 159; the sequence is ACDGDYLNLQ…KYLLVSFKCQ (93 aa). N-linked (GlcNAc...) asparagine glycosylation is present at Asn-165. An SUEL-type lectin 2 domain is found at 168–260; it reads VCEDQELKLH…KYLTVTYACV (93 aa). The chain crosses the membrane as a helical span at residues 323 to 343; that stretch reads ALLFVSSVCIGLALTLCALVI. Residues 344–441 are Cytoplasmic-facing; that stretch reads RESCAKDFRD…SLPRNMGQFY (98 aa). The interval 362 to 390 is disordered; sequence VPGSDKVEEDSEDEEEEEDPSESDFPGEL. Over residues 368–383 the composition is skewed to acidic residues; that stretch reads VEEDSEDEEEEEDPSE.

This sequence belongs to the EVA1 family. As to expression, ubiquitous.

It localises to the membrane. Binds heparin. The sequence is that of Protein eva-1 homolog C (EVA1C) from Homo sapiens (Human).